The following is a 236-amino-acid chain: Oligogalacturonate-specific porin KdgM (236 aa).

A signal peptide spans 1 to 20 (MKIKLLTLAVASLVSVNALA).

Belongs to the oligogalacturonate-specific porin KdgM (TC 1.B.35) family. In terms of assembly, monomer.

The protein localises to the cell outer membrane. Functionally, porin specific for oligogalacturonides. Also required for full virulence. This Dickeya dadantii (strain 3937) (Erwinia chrysanthemi (strain 3937)) protein is Oligogalacturonate-specific porin KdgM (kdgM).